The following is a 311-amino-acid chain: Tryptophan 2,3-dioxygenase (311 aa).

The disordered stretch occupies residues 1 to 37 (MQPPGGDAPAGCPFSGARAAQPAQAAHEAPHVPGEAD). The span at 17–27 (ARAAQPAQAAH) shows a compositional bias: low complexity. Residues 80-84 (FIIQH), Y142, and R146 contribute to the substrate site. Position 269 (H269) interacts with heme. Residue T283 coordinates substrate.

This sequence belongs to the tryptophan 2,3-dioxygenase family. In terms of assembly, homotetramer. Heme is required as a cofactor.

It carries out the reaction L-tryptophan + O2 = N-formyl-L-kynurenine. It functions in the pathway amino-acid degradation; L-tryptophan degradation via kynurenine pathway; L-kynurenine from L-tryptophan: step 1/2. Functionally, heme-dependent dioxygenase that catalyzes the oxidative cleavage of the L-tryptophan (L-Trp) pyrrole ring and converts L-tryptophan to N-formyl-L-kynurenine. Catalyzes the oxidative cleavage of the indole moiety. The chain is Tryptophan 2,3-dioxygenase from Burkholderia cenocepacia (strain ATCC BAA-245 / DSM 16553 / LMG 16656 / NCTC 13227 / J2315 / CF5610) (Burkholderia cepacia (strain J2315)).